A 336-amino-acid chain; its full sequence is Coproporphyrin III ferrochelatase (336 aa).

Positions 52 and 116 each coordinate Fe-coproporphyrin III. Fe(2+)-binding residues include His172 and Glu255.

The protein belongs to the ferrochelatase family.

The protein localises to the cytoplasm. The enzyme catalyses Fe-coproporphyrin III + 2 H(+) = coproporphyrin III + Fe(2+). Its pathway is porphyrin-containing compound metabolism; protoheme biosynthesis. Functionally, involved in coproporphyrin-dependent heme b biosynthesis. Catalyzes the insertion of ferrous iron into coproporphyrin III to form Fe-coproporphyrin III. In Mycolicibacterium paratuberculosis (strain ATCC BAA-968 / K-10) (Mycobacterium paratuberculosis), this protein is Coproporphyrin III ferrochelatase.